Here is a 282-residue protein sequence, read N- to C-terminus: 40S small subunit processome assembly factor 1 (282 aa).

2 disordered regions span residues 27-98 (YDLG…SEVP) and 121-143 (FHSR…NKTK). Positions 48 to 59 (KRDSETVADRAA) are enriched in basic and acidic residues. Residues Ser-67 and Ser-75 each carry the phosphoserine modification. Over residues 89-98 (SAPAAPSEVP) the composition is skewed to low complexity. Basic and acidic residues predominate over residues 131–143 (KSEEDKPAKNKTK). Lys-173 bears the N6-acetyllysine mark. Residues 208 to 226 (EKRTSMEEEKRAAQETDIF) show a composition bias toward basic and acidic residues. Positions 208–254 (EKRTSMEEEKRAAQETDIFKRKKRKGRSQEDRRSKKLAPSILSSGRA) are disordered. The residue at position 268 (Ser-268) is a Phosphoserine.

In terms of assembly, part of the small subunit (SSU) processome, composed of more than 70 proteins and the RNA chaperone small nucleolar RNA (snoRNA) U3.

It is found in the chromosome. It localises to the nucleus. Its subcellular location is the nucleolus. Its function is as follows. Part of the small subunit (SSU) processome, first precursor of the small eukaryotic ribosomal subunit. During the assembly of the SSU processome in the nucleolus, many ribosome biogenesis factors, an RNA chaperone and ribosomal proteins associate with the nascent pre-rRNA and work in concert to generate RNA folding, modifications, rearrangements and cleavage as well as targeted degradation of pre-ribosomal RNA by the RNA exosome. Prevents helicase DHX37 to be recruited before post-A1 state. The sequence is that of 40S small subunit processome assembly factor 1 from Rattus norvegicus (Rat).